The sequence spans 218 residues: Adenylate kinase (218 aa).

10-15 (GAGKGT) is a binding site for ATP. Positions 30-59 (STGDMLRAAVKAGSEMGLKAKAVMDAGQLV) are NMP. AMP-binding positions include T31, R36, 57 to 59 (QLV), 85 to 88 (GFPR), and Q92. Positions 122–159 (GRRVHEASGRTYHLVYNPPKVEGKDDVTGEDLVQRADD) are LID. ATP-binding positions include R123 and 132-133 (TY). R156 and R167 together coordinate AMP. Residue G203 participates in ATP binding.

It belongs to the adenylate kinase family. In terms of assembly, monomer.

The protein resides in the cytoplasm. The enzyme catalyses AMP + ATP = 2 ADP. It participates in purine metabolism; AMP biosynthesis via salvage pathway; AMP from ADP: step 1/1. Catalyzes the reversible transfer of the terminal phosphate group between ATP and AMP. Plays an important role in cellular energy homeostasis and in adenine nucleotide metabolism. The sequence is that of Adenylate kinase from Marinomonas sp. (strain MWYL1).